Here is a 243-residue protein sequence, read N- to C-terminus: uncharacterized protein (243 aa).

This is an uncharacterized protein from Acanthamoeba polyphaga (Amoeba).